The chain runs to 82 residues: KappaPI-actitoxin-Avd3e (82 aa).

The signal sequence occupies residues 1-16 (MVFLLCFFLVADVSYG). Residues 21 to 71 (CELPKVVGPCRARFPRYYYNSSSKRCEKFIYGGCGGNANNFHTLEECEKVC) form the BPTI/Kunitz inhibitor domain. 3 cysteine pairs are disulfide-bonded: Cys-21/Cys-71, Cys-30/Cys-54, and Cys-46/Cys-67. The propeptide occupies 76-82 (RDSPKEN).

It belongs to the venom Kunitz-type family. Sea anemone type 2 potassium channel toxin subfamily.

Its subcellular location is the secreted. It localises to the nematocyst. Functionally, serine protease inhibitor that inhibits both tissue and plasma kallikreins. Has hemolytic activity. Inhibits voltage-gated potassium channels (Kv). The sequence is that of KappaPI-actitoxin-Avd3e from Anemonia viridis (Snakelocks anemone).